We begin with the raw amino-acid sequence, 388 residues long: Zinc finger protein 1 (388 aa).

Over residues 1-19 (MSSIPNINWNDPNNGKSNT) the composition is skewed to polar residues. Disordered stretches follow at residues 1 to 120 (MSSI…QQPL), 157 to 219 (LQQR…QQWD), and 236 to 311 (SSIQ…KPIT). Positions 20-38 (SRQSQPQPQLPSNVSPPNS) are enriched in low complexity. 2 stretches are compositionally biased toward polar residues: residues 52-67 (YGSSQFSNEYSRNPNT) and 88-97 (YPVQQTAQQR). Composition is skewed to low complexity over residues 102–120 (LQQVHSQQQQQQQQQQQPL) and 157–172 (LQQRQQAQGQQLKSQL). Positions 173–203 (NEQNAMMSASTQQYPVQDFTNPYPNAQNPAE) are enriched in polar residues. 2 stretches are compositionally biased toward low complexity: residues 204 to 217 (QQQQQQPLRTQSQQ) and 236 to 259 (SSIQQQIPPQNLSPSEQQQVKQQQ). A compositionally biased stretch (basic residues) spans 268–278 (KKKPGRKPKLR). A compositionally biased stretch (polar residues) spans 282-294 (ESSSETPQVPKTA). The segment at residues 318 to 345 (CLTCRQRKKRCCETRPRCTECTRLRLNC) is a DNA-binding region (zn(2)-C6 fungal-type). The disordered stretch occupies residues 348 to 367 (PKPGTEHKNKPKDQKDDENT). Positions 351 to 367 (GTEHKNKPKDQKDDENT) are enriched in basic and acidic residues.

It localises to the nucleus. Functionally, perhaps a regulatory role. May be involved in transcriptional activation. The protein is Zinc finger protein 1 (CZF1) of Candida albicans (strain WO-1) (Yeast).